Here is a 234-residue protein sequence, read N- to C-terminus: Ubiquitin thioesterase OTUB2 (234 aa).

The OTU domain occupies 40–231 (TSIRKTKGDG…TSHYNILYAA (192 aa)). The active site involves Asp-48. The Nucleophile role is filled by Cys-51. Catalysis depends on residues His-205 and His-224.

It belongs to the peptidase C65 family.

It carries out the reaction Thiol-dependent hydrolysis of ester, thioester, amide, peptide and isopeptide bonds formed by the C-terminal Gly of ubiquitin (a 76-residue protein attached to proteins as an intracellular targeting signal).. Its function is as follows. Hydrolase that can remove conjugated ubiquitin from proteins in vitro and may therefore play an important regulatory role at the level of protein turnover by preventing degradation. Mediates deubiquitination of 'Lys-11'-,'Lys-48'- and 'Lys-63'-linked polyubiquitin chains, with a preference for 'Lys-63'-linked polyubiquitin chains. The sequence is that of Ubiquitin thioesterase OTUB2 (Otub2) from Mus musculus (Mouse).